The sequence spans 311 residues: Ribosomal RNA small subunit methyltransferase H (311 aa).

S-adenosyl-L-methionine contacts are provided by residues 32-34, aspartate 52, phenylalanine 79, aspartate 100, and glutamine 107; that span reads AGH.

The protein belongs to the methyltransferase superfamily. RsmH family.

It is found in the cytoplasm. The catalysed reaction is cytidine(1402) in 16S rRNA + S-adenosyl-L-methionine = N(4)-methylcytidine(1402) in 16S rRNA + S-adenosyl-L-homocysteine + H(+). Its function is as follows. Specifically methylates the N4 position of cytidine in position 1402 (C1402) of 16S rRNA. The polypeptide is Ribosomal RNA small subunit methyltransferase H (Staphylococcus aureus (strain bovine RF122 / ET3-1)).